The primary structure comprises 125 residues: Large ribosomal subunit protein eL31 (125 aa).

The residue at position 1 (Met-1) is an N-acetylmethionine. The residue at position 15 (Ser-15) is a Phosphoserine. N6-succinyllysine is present on residues Lys-55 and Lys-70. Residue Lys-75 is modified to N6-acetyllysine; alternate. N6-succinyllysine; alternate is present on Lys-75. Ser-98 carries the post-translational modification Phosphoserine.

This sequence belongs to the eukaryotic ribosomal protein eL31 family. In terms of assembly, component of the large ribosomal subunit.

It is found in the cytoplasm. Component of the large ribosomal subunit. The ribosome is a large ribonucleoprotein complex responsible for the synthesis of proteins in the cell. The sequence is that of Large ribosomal subunit protein eL31 (RPL31) from Oryctolagus cuniculus (Rabbit).